Consider the following 224-residue polypeptide: Endonuclease NucS (224 aa).

Belongs to the NucS endonuclease family.

It is found in the cytoplasm. Its function is as follows. Cleaves both 3' and 5' ssDNA extremities of branched DNA structures. This is Endonuclease NucS from Rhodococcus erythropolis (strain PR4 / NBRC 100887).